Reading from the N-terminus, the 127-residue chain is Large ribosomal subunit protein bL21 (127 aa).

It belongs to the bacterial ribosomal protein bL21 family. In terms of assembly, part of the 50S ribosomal subunit. Contacts protein L20.

In terms of biological role, this protein binds to 23S rRNA in the presence of protein L20. The polypeptide is Large ribosomal subunit protein bL21 (Synechococcus elongatus (strain ATCC 33912 / PCC 7942 / FACHB-805) (Anacystis nidulans R2)).